Here is a 1235-residue protein sequence, read N- to C-terminus: DNA polymerase catalytic subunit (1235 aa).

2 disordered regions span residues 640–691 and 1098–1134; these read QGRF…ETAG and AAAP…ASKP. Basic and acidic residues predominate over residues 650-661; the sequence is APKRPAAAREDE. The span at 662-675 shows a compositional bias: acidic residues; it reads ERPEEEGEDEDERE. The span at 676-691 shows a compositional bias: basic and acidic residues; that stretch reads EGGGEREPDGARETAG.

This sequence belongs to the DNA polymerase type-B family. Forms a complex with the ssDNA-binding protein UL29, the DNA polymerase processivity factor, and the alkaline exonuclease. Interacts with the putative helicase-primase complex subunit UL8; this interaction may coordinate leading and lagging strand DNA synthesis at the replication fork.

The protein localises to the host nucleus. It carries out the reaction DNA(n) + a 2'-deoxyribonucleoside 5'-triphosphate = DNA(n+1) + diphosphate. The catalysed reaction is Endonucleolytic cleavage to 5'-phosphomonoester.. Functionally, replicates viral genomic DNA. The replication complex is composed of six viral proteins: the DNA polymerase, processivity factor, primase, primase-associated factor, helicase, and ssDNA-binding protein. Additionally, the polymerase contains an intrinsic ribonuclease H (RNase H) activity that specifically degrades RNA/DNA heteroduplexes or duplex DNA substrates in the 5' to 3' direction. Therefore, it can catalyze the excision of the RNA primers that initiate the synthesis of Okazaki fragments at a replication fork during viral DNA replication. This is DNA polymerase catalytic subunit from Homo sapiens (Human).